A 414-amino-acid polypeptide reads, in one-letter code: Tryptophan synthase beta chain (414 aa).

Residues 1–28 (MVSTISRQDQNNNDDLNQPSKEGRFGKY) are disordered. Residues 8–18 (QDQNNNDDLNQ) show a composition bias toward low complexity. Lys108 carries the N6-(pyridoxal phosphate)lysine modification.

The protein belongs to the TrpB family. As to quaternary structure, tetramer of two alpha and two beta chains. It depends on pyridoxal 5'-phosphate as a cofactor.

It carries out the reaction (1S,2R)-1-C-(indol-3-yl)glycerol 3-phosphate + L-serine = D-glyceraldehyde 3-phosphate + L-tryptophan + H2O. It participates in amino-acid biosynthesis; L-tryptophan biosynthesis; L-tryptophan from chorismate: step 5/5. Functionally, the beta subunit is responsible for the synthesis of L-tryptophan from indole and L-serine. In Prochlorococcus marinus subsp. pastoris (strain CCMP1986 / NIES-2087 / MED4), this protein is Tryptophan synthase beta chain.